The primary structure comprises 126 residues: MHLSQLIACALLLALLSLRPSEAKPGTPPKVPRTPPGEELAEPQAAGGNQKKGDKTPGGGGANLKGDRSRLLRDLRVDTKSRAAWARLLHEHPNARKYKGGNKKGLSKGCFGLKLDRIGSMSGLGC.

The signal sequence occupies residues 1-23 (MHLSQLIACALLLALLSLRPSEA). Residues 19–71 (RPSEAKPGTPPKVPRTPPGEELAEPQAAGGNQKKGDKTPGGGGANLKGDRSRL) are disordered. Residues 24–73 (KPGTPPKVPRTPPGEELAEPQAAGGNQKKGDKTPGGGGANLKGDRSRLLR) constitute a propeptide that is removed on maturation. Positions 26 to 35 (GTPPKVPRTP) are enriched in pro residues. The cysteines at positions 110 and 126 are disulfide-linked.

This sequence belongs to the natriuretic peptide family. Degraded by IDE (in vitro). In terms of tissue distribution, expressed exclusively in brain.

Its subcellular location is the secreted. Hormone which plays a role in endochondral ossification through regulation of cartilaginous growth plate chondrocytes proliferation and differentiation. May also be vasoactive and natriuretic. Acts by specifically binding and stimulating NPR2 to produce cGMP. Binds the clearance receptor NPR3. In Rattus norvegicus (Rat), this protein is C-type natriuretic peptide (Nppc).